A 472-amino-acid chain; its full sequence is WASH complex subunit 1 (472 aa).

Residues 1–51 form a required for WASH complex assembly region; sequence MPQNRSMESQAYSLPLILPDLRREEAIHQITDTLQHLQTVSNDIFSRILQR. 3 disordered regions span residues 289–365, 377–412, and 426–472; these read ENSR…SDGR, GIGK…GDLM, and ISGK…DWES. Composition is skewed to pro residues over residues 301–319 and 327–336; these read LPPP…PPEP and SLAPPLPIPA. The tract at residues 352–472 is VCA; that stretch reads QGAPKEVVNP…GDGDEEDWES (121 aa). In terms of domain architecture, WH2 spans 364–386; that stretch reads GRASLLESIRQAGGIGKAKLRNV. Basic and acidic residues predominate over residues 385 to 401; the sequence is NVKEKKLEKKKMKEQEQ.

This sequence belongs to the WASH1 family. Component of the WASH complex.

It is found in the early endosome membrane. It localises to the recycling endosome membrane. Acts as a nucleation-promoting factor at the surface of endosomes, where it recruits and activates the Arp2/3 complex to induce actin polymerization, playing a key role in the fission of tubules that serve as transport intermediates during endosome sorting. The protein is WASH complex subunit 1 of Xenopus tropicalis (Western clawed frog).